Here is a 364-residue protein sequence, read N- to C-terminus: Fructose-bisphosphate aldolase A (364 aa).

Residue Thr-9 is modified to Phosphothreonine. Phosphoserine occurs at positions 36 and 39. Lys-42 bears the N6-acetyllysine; alternate mark. Lys-42 is covalently cross-linked (Glycyl lysine isopeptide (Lys-Gly) (interchain with G-Cter in SUMO1); alternate). Lys-42 participates in a covalent cross-link: Glycyl lysine isopeptide (Lys-Gly) (interchain with G-Cter in SUMO2); alternate. Position 43 (Arg-43) interacts with beta-D-fructose 1,6-bisphosphate. Position 46 is a phosphoserine (Ser-46). An N6-(2-hydroxyisobutyryl)lysine modification is found at Lys-99. Lys-108 is subject to N6-acetyllysine. The residue at position 111 (Lys-111) is an N6-acetyllysine; alternate. The residue at position 111 (Lys-111) is an N6-malonyllysine; alternate. Phosphoserine is present on Ser-132. The residue at position 147 (Lys-147) is an N6-(2-hydroxyisobutyryl)lysine. The active-site Proton acceptor is the Glu-188. The active-site Schiff-base intermediate with dihydroxyacetone-P is Lys-230. Phosphoserine is present on Ser-272. Residues 272–274, Ser-301, and Arg-304 each bind beta-D-fructose 1,6-bisphosphate; that span reads SGG. An N6-malonyllysine modification is found at Lys-312. Lys-330 carries the post-translational modification N6-acetyllysine. Position 361 is a deamidated asparagine; in form beta (Asn-361).

The protein belongs to the class I fructose-bisphosphate aldolase family. In terms of assembly, homotetramer. Interacts with SNX9 and WAS. Interacts with FBP2; the interaction blocks FBP2 inhibition by physiological concentrations of AMP and reduces inhibition by Ca(2+). Post-translationally, asn-361 in form alpha is deaminated to Asp in form beta.

It is found in the cytoplasm. Its subcellular location is the myofibril. The protein resides in the sarcomere. The protein localises to the i band. It localises to the m line. It carries out the reaction beta-D-fructose 1,6-bisphosphate = D-glyceraldehyde 3-phosphate + dihydroxyacetone phosphate. The protein operates within carbohydrate degradation; glycolysis; D-glyceraldehyde 3-phosphate and glycerone phosphate from D-glucose: step 4/4. Functionally, plays a key role in glycolysis and gluconeogenesis. In addition, may also function as scaffolding protein. This Oryctolagus cuniculus (Rabbit) protein is Fructose-bisphosphate aldolase A (ALDOA).